We begin with the raw amino-acid sequence, 58 residues long: Protein translocase subunit SecE (58 aa).

The chain crosses the membrane as a helical span at residues 38–58 (IVMAFVGLLAYLIQLVLAFII).

This sequence belongs to the SecE/SEC61-gamma family. In terms of assembly, component of the Sec protein translocase complex. Heterotrimer consisting of SecY (alpha), SecG (beta) and SecE (gamma) subunits. The heterotrimers can form oligomers, although 1 heterotrimer is thought to be able to translocate proteins. Interacts with the ribosome. May interact with SecDF, and other proteins may be involved.

Its subcellular location is the cell membrane. Functionally, essential subunit of the Sec protein translocation channel SecYEG. Clamps together the 2 halves of SecY. May contact the channel plug during translocation. The polypeptide is Protein translocase subunit SecE (Acidianus ambivalens (Desulfurolobus ambivalens)).